The following is a 178-amino-acid chain: MPSNALWLRADQLSSVSPAVLDWLFDEGSLTRRLTALADGAFRVEPLLEGWQTLRDDECQGLDVPTGSSGWVREVYLHGHDRPWVFARSVAARSALEGSGFDLALLGTRSLGELLFSDSAFERGPIEVCRYPAAGLPAEVRAEGLWGRRSRFSRGALGVLVAEVYLPRLWDQAGIADV.

Positions 73, 111, and 163 each coordinate substrate.

This sequence belongs to the UbiC family.

It localises to the cytoplasm. It catalyses the reaction chorismate = 4-hydroxybenzoate + pyruvate. It functions in the pathway cofactor biosynthesis; ubiquinone biosynthesis. Functionally, removes the pyruvyl group from chorismate, with concomitant aromatization of the ring, to provide 4-hydroxybenzoate (4HB) for the ubiquinone pathway. This is Probable chorismate pyruvate-lyase from Pseudomonas aeruginosa (strain ATCC 15692 / DSM 22644 / CIP 104116 / JCM 14847 / LMG 12228 / 1C / PRS 101 / PAO1).